The following is a 368-amino-acid chain: UV excision repair protein rhp23 (368 aa).

Residues 1–77 enclose the Ubiquitin-like domain; that stretch reads MNLTFKNLQQ…IVCMVSRPKT (77 aa). 2 stretches are compositionally biased toward low complexity: residues 76–88 and 103–124; these read KTSTSTPKSAASP and APSSTVAESTSTTQTVAAAAPS. The interval 76–134 is disordered; that stretch reads KTSTSTPKSAASPAPNPPASVPEKKVEAPSSTVAESTSTTQTVAAAAPSNPDTTATSEA. Residues Ser84 and Ser87 each carry the phosphoserine modification. 2 consecutive UBA domains span residues 135–185 and 320–360; these read PIDA…LLTG and QEES…LFEH. The residue at position 364 (Ser364) is a Phosphoserine.

It localises to the nucleus. Functionally, involved in postreplication repair of UV-damaged DNA. Postreplication repair functions in gap-filling of a daughter strand on replication of damaged DNA. In terms of biological role, protects ubiquitin chains against dissambly by deubiquitinating enzymes thereby promoting protein degradation. The polypeptide is UV excision repair protein rhp23 (rhp23) (Schizosaccharomyces pombe (strain 972 / ATCC 24843) (Fission yeast)).